Here is a 1013-residue protein sequence, read N- to C-terminus: GTPase-activating protein BEM3 (1013 aa).

Disordered stretches follow at residues 90–197, 258–277, 282–301, and 307–421; these read TVVE…GSPA, GSRYDTERAGGPGPLSPESI, SDLQEHQPSDLSSTTRTDLG, and VDTT…HQSK. Over residues 143–160 the composition is skewed to polar residues; that stretch reads QEATSGAQQVPLLTSSKS. Polar residues-rich tracts occupy residues 309 to 319, 333 to 388, and 404 to 418; these read TTFNAEDNPTG, TLQN…TSSN, and KSYSQHSGSPHSNSH. The PH domain maps to 555-662; sequence EFAKEGMLLV…WISVLTTLCD (108 aa). The interval 702–726 is disordered; the sequence is AMDATSPTRPNDPNPVSLTSEEEKE. The segment covering 706–720 has biased composition (polar residues); sequence TSPTRPNDPNPVSLT. Residues 799 to 1013 form the Rho-GAP domain; sequence LQLSSHPYQG…PPVNIHIPQI (215 aa).

It is found in the cytoplasm. In terms of biological role, GTPase-activating protein (GAP) for CDC42 and less efficiently for RHO1. Negative regulator of the pheromone-response pathway through the STE20 protein kinase. This is GTPase-activating protein BEM3 (BEM3) from Eremothecium gossypii (strain ATCC 10895 / CBS 109.51 / FGSC 9923 / NRRL Y-1056) (Yeast).